A 426-amino-acid chain; its full sequence is Histidine--tRNA ligase (426 aa).

It belongs to the class-II aminoacyl-tRNA synthetase family. Homodimer.

It localises to the cytoplasm. It carries out the reaction tRNA(His) + L-histidine + ATP = L-histidyl-tRNA(His) + AMP + diphosphate + H(+). The chain is Histidine--tRNA ligase from Prochlorococcus marinus (strain MIT 9312).